A 288-amino-acid polypeptide reads, in one-letter code: Alpha/beta hydrolase domain-containing protein 17B (288 aa).

Active-site charge relay system residues include Ser-170, Asp-235, and His-264. A Phosphoserine modification is found at Ser-282.

Belongs to the AB hydrolase superfamily. ABHD17 family. In terms of processing, palmitoylated on cysteine residues located in a cysteine cluster at the N-terminus which promotes membrane localization. Palmitoylation is required for post-synaptic localization and for depalmitoylating activity towards DLG4/PSD95.

The protein localises to the cell membrane. It localises to the recycling endosome membrane. The protein resides in the cell projection. It is found in the dendritic spine. Its subcellular location is the postsynaptic density membrane. The enzyme catalyses S-hexadecanoyl-L-cysteinyl-[protein] + H2O = L-cysteinyl-[protein] + hexadecanoate + H(+). Inhibited by palmostatin-B. In terms of biological role, hydrolyzes fatty acids from S-acylated cysteine residues in proteins. Has depalmitoylating activity towards DLG4/PSD95. Has depalmitoylating activity towards GAP43. Has depalmitoylating activity towards MAP6. Has depalmitoylating activity towards NRAS. This chain is Alpha/beta hydrolase domain-containing protein 17B, found in Homo sapiens (Human).